A 483-amino-acid chain; its full sequence is Dihydrolipoyllysine-residue acetyltransferase component of pyruvate dehydrogenase complex, mitochondrial (483 aa).

The N-terminal 28 residues, 1-28, are a transit peptide targeting the mitochondrion; it reads MLSANMLRRMHHGVAVTRMLLVSNGKVQ. The region spanning 53 to 129 is the Lipoyl-binding domain; it reads HTVINMPALS…PVGKPLAVTV (77 aa). Lys94 bears the N6-lipoyllysine mark. 2 disordered regions span residues 143–187 and 234–254; these read IEDS…DRVF and EAAA…APGD. Positions 146–160 are enriched in basic and acidic residues; the sequence is SSAKEPSAKSGEEKS. A compositionally biased stretch (polar residues) spans 161-178; sequence APSSEKQSKETSSPSNVS. A Peripheral subunit-binding (PSBD) domain is found at 187-224; that stretch reads FASPLARKLAEEKDLDLSQIRGSGPNGRIIKVDIENFK. Residues 235–252 show a composition bias toward low complexity; that stretch reads AAAKATTPAASAADAAAP. Active-site residues include His456 and Asp460.

It belongs to the 2-oxoacid dehydrogenase family. (R)-lipoate is required as a cofactor.

Its subcellular location is the mitochondrion matrix. It carries out the reaction N(6)-[(R)-dihydrolipoyl]-L-lysyl-[protein] + acetyl-CoA = N(6)-[(R)-S(8)-acetyldihydrolipoyl]-L-lysyl-[protein] + CoA. Its function is as follows. The pyruvate dehydrogenase complex catalyzes the overall conversion of pyruvate to acetyl-CoA and CO(2). It contains multiple copies of three enzymatic components: pyruvate dehydrogenase (E1), dihydrolipoamide acetyltransferase (E2) and lipoamide dehydrogenase (E3). The chain is Dihydrolipoyllysine-residue acetyltransferase component of pyruvate dehydrogenase complex, mitochondrial from Schizosaccharomyces pombe (strain 972 / ATCC 24843) (Fission yeast).